The following is a 38-amino-acid chain: Large ribosomal subunit protein bL36 (38 aa).

Belongs to the bacterial ribosomal protein bL36 family.

This Streptococcus agalactiae serotype III (strain NEM316) protein is Large ribosomal subunit protein bL36.